We begin with the raw amino-acid sequence, 137 residues long: Nucleoside diphosphate kinase (137 aa).

ATP-binding residues include lysine 9, phenylalanine 57, arginine 85, threonine 91, arginine 102, and asparagine 112. Histidine 115 functions as the Pros-phosphohistidine intermediate in the catalytic mechanism.

Belongs to the NDK family. Homotetramer. Mg(2+) serves as cofactor.

It is found in the cytoplasm. The catalysed reaction is a 2'-deoxyribonucleoside 5'-diphosphate + ATP = a 2'-deoxyribonucleoside 5'-triphosphate + ADP. It catalyses the reaction a ribonucleoside 5'-diphosphate + ATP = a ribonucleoside 5'-triphosphate + ADP. Major role in the synthesis of nucleoside triphosphates other than ATP. The ATP gamma phosphate is transferred to the NDP beta phosphate via a ping-pong mechanism, using a phosphorylated active-site intermediate. In Sulfurimonas denitrificans (strain ATCC 33889 / DSM 1251) (Thiomicrospira denitrificans (strain ATCC 33889 / DSM 1251)), this protein is Nucleoside diphosphate kinase.